The chain runs to 146 residues: MEMDKRMKSLAMTAFFGELNTLDIMALIMSIFKHHPNNTIFSVDKDGQFMIDFEYDNYKASQYLDLTLTPISGNECKTHASSIAEQLACVDIIKEDISEYIKTTPRLKRFIKKYRNRSYTRISRDTEKLKIALAKGIDYEYIKDAC.

A helical membrane pass occupies residues 10 to 31 (LAMTAFFGELNTLDIMALIMSI).

The protein belongs to the orthopoxvirus OPG112 family.

It localises to the host membrane. The protein localises to the host cytoplasm. Contributes to the formation of crescents and immature virions (IV). Interacts with phosphatidylinositol-3-phosphate (PI3P) and phosphatidylinositol-4-phosphate (PI4P) lipids in order to form virion membranes. Mechanistically, mediates proper formation of OPG125-hexamers, and hence the honey comb lattice and spherical immature virus. This chain is Late protein OPG112 (OPG112), found in Cynomys gunnisoni (Gunnison's prairie dog).